Consider the following 825-residue polypeptide: Phenylalanine--tRNA ligase beta subunit (825 aa).

The tRNA-binding domain occupies 39–154; the sequence is RTWADGVVLG…EAHPLGSDVR (116 aa). In terms of domain architecture, B5 spans 411–506; sequence PLERTLKLRL…RLYGYDRFSE (96 aa). Positions 484, 490, 493, and 494 each coordinate Mg(2+). In terms of domain architecture, FDX-ACB spans 731 to 824; sequence SPFPAADRDI…LATQFPVTLR (94 aa).

The protein belongs to the phenylalanyl-tRNA synthetase beta subunit family. Type 1 subfamily. Tetramer of two alpha and two beta subunits. The cofactor is Mg(2+).

It localises to the cytoplasm. The enzyme catalyses tRNA(Phe) + L-phenylalanine + ATP = L-phenylalanyl-tRNA(Phe) + AMP + diphosphate + H(+). The chain is Phenylalanine--tRNA ligase beta subunit from Synechococcus sp. (strain JA-2-3B'a(2-13)) (Cyanobacteria bacterium Yellowstone B-Prime).